The sequence spans 341 residues: UDP-3-O-acylglucosamine N-acyltransferase (341 aa).

Histidine 241 serves as the catalytic Proton acceptor.

This sequence belongs to the transferase hexapeptide repeat family. LpxD subfamily. Homotrimer.

It carries out the reaction a UDP-3-O-[(3R)-3-hydroxyacyl]-alpha-D-glucosamine + a (3R)-hydroxyacyl-[ACP] = a UDP-2-N,3-O-bis[(3R)-3-hydroxyacyl]-alpha-D-glucosamine + holo-[ACP] + H(+). The protein operates within bacterial outer membrane biogenesis; LPS lipid A biosynthesis. Functionally, catalyzes the N-acylation of UDP-3-O-acylglucosamine using 3-hydroxyacyl-ACP as the acyl donor. Is involved in the biosynthesis of lipid A, a phosphorylated glycolipid that anchors the lipopolysaccharide to the outer membrane of the cell. This chain is UDP-3-O-acylglucosamine N-acyltransferase, found in Christiangramia forsetii (strain DSM 17595 / CGMCC 1.15422 / KT0803) (Gramella forsetii).